The primary structure comprises 120 residues: NAD(P)H-quinone oxidoreductase subunit 3, chloroplastic (120 aa).

The next 3 helical transmembrane spans lie at 9–29 (IFWA…LISG), 64–84 (MFAL…PWAM), and 88–108 (VLGV…IVGS).

It belongs to the complex I subunit 3 family. As to quaternary structure, NDH is composed of at least 16 different subunits, 5 of which are encoded in the nucleus.

It localises to the plastid. The protein resides in the chloroplast thylakoid membrane. It catalyses the reaction a plastoquinone + NADH + (n+1) H(+)(in) = a plastoquinol + NAD(+) + n H(+)(out). The enzyme catalyses a plastoquinone + NADPH + (n+1) H(+)(in) = a plastoquinol + NADP(+) + n H(+)(out). Functionally, NDH shuttles electrons from NAD(P)H:plastoquinone, via FMN and iron-sulfur (Fe-S) centers, to quinones in the photosynthetic chain and possibly in a chloroplast respiratory chain. The immediate electron acceptor for the enzyme in this species is believed to be plastoquinone. Couples the redox reaction to proton translocation, and thus conserves the redox energy in a proton gradient. This chain is NAD(P)H-quinone oxidoreductase subunit 3, chloroplastic, found in Gossypium hirsutum (Upland cotton).